Here is a 118-residue protein sequence, read N- to C-terminus: Large ribosomal subunit protein bL20 (118 aa).

The protein belongs to the bacterial ribosomal protein bL20 family.

Functionally, binds directly to 23S ribosomal RNA and is necessary for the in vitro assembly process of the 50S ribosomal subunit. It is not involved in the protein synthesizing functions of that subunit. This chain is Large ribosomal subunit protein bL20, found in Methylibium petroleiphilum (strain ATCC BAA-1232 / LMG 22953 / PM1).